Consider the following 149-residue polypeptide: Large ribosomal subunit protein bL9 (149 aa).

It belongs to the bacterial ribosomal protein bL9 family.

Its function is as follows. Binds to the 23S rRNA. The sequence is that of Large ribosomal subunit protein bL9 from Shewanella amazonensis (strain ATCC BAA-1098 / SB2B).